A 356-amino-acid polypeptide reads, in one-letter code: MTGPRTLLVMAGGTGGHVFPGLAVAHALREQGWKVVWLGNRTGMEATLVPKHDIPMEFIQFGGLRGKGLVTKFLLPLNLLRAFWQSIAALRRVRPSVVLGMGGYITFPAGMMASLLGRPLVLHEQNSIAGLANKVLAKVADRVLCAFPDTLPGGEWTGNPVREELAHLDAPEARYDQRSGPLRILVVGGSLGAAALNEVVPKAIALLPGGERPVVTHQAGAKQIDTLRANYAAAQVPAQTLPFIDDMARAYADADLVICRAGAMTVSEVAAAGVAAMFVPFPHAVDDHQTTNAEFLSKQGAALLVQQKDLTAEGLAQTIASLTRPQLKDMARLARGLAKPEATRRVAEICSQLARD.

UDP-N-acetyl-alpha-D-glucosamine contacts are provided by residues 14-16 (TGG), Asn-126, Arg-162, Ser-190, Ile-244, and Gln-289.

Belongs to the glycosyltransferase 28 family. MurG subfamily.

It localises to the cell inner membrane. It carries out the reaction di-trans,octa-cis-undecaprenyl diphospho-N-acetyl-alpha-D-muramoyl-L-alanyl-D-glutamyl-meso-2,6-diaminopimeloyl-D-alanyl-D-alanine + UDP-N-acetyl-alpha-D-glucosamine = di-trans,octa-cis-undecaprenyl diphospho-[N-acetyl-alpha-D-glucosaminyl-(1-&gt;4)]-N-acetyl-alpha-D-muramoyl-L-alanyl-D-glutamyl-meso-2,6-diaminopimeloyl-D-alanyl-D-alanine + UDP + H(+). It participates in cell wall biogenesis; peptidoglycan biosynthesis. Its function is as follows. Cell wall formation. Catalyzes the transfer of a GlcNAc subunit on undecaprenyl-pyrophosphoryl-MurNAc-pentapeptide (lipid intermediate I) to form undecaprenyl-pyrophosphoryl-MurNAc-(pentapeptide)GlcNAc (lipid intermediate II). This Cupriavidus necator (strain ATCC 17699 / DSM 428 / KCTC 22496 / NCIMB 10442 / H16 / Stanier 337) (Ralstonia eutropha) protein is UDP-N-acetylglucosamine--N-acetylmuramyl-(pentapeptide) pyrophosphoryl-undecaprenol N-acetylglucosamine transferase.